We begin with the raw amino-acid sequence, 261 residues long: Metallo-beta-lactamase fold-containing protein ST1585 (261 aa).

Residues His58, His60, Asp62, His63, His148, Asp165, and His207 each coordinate Zn(2+).

It belongs to the metallo-beta-lactamase superfamily. Monomer.

The polypeptide is Metallo-beta-lactamase fold-containing protein ST1585 (Sulfurisphaera tokodaii (strain DSM 16993 / JCM 10545 / NBRC 100140 / 7) (Sulfolobus tokodaii)).